A 215-amino-acid chain; its full sequence is Peroxiredoxin (215 aa).

Residues 6–161 (PLIGEEFPRL…ILRAVRALQT (156 aa)) form the Thioredoxin domain. The Cysteine sulfenic acid (-SOH) intermediate role is filled by C48. R124 contributes to the substrate binding site. The cysteines at positions 205 and 211 are disulfide-linked.

This sequence belongs to the peroxiredoxin family. Prx6 subfamily. Homodecamer. Pentamer of dimers that assemble into a ring structure.

Its subcellular location is the cytoplasm. The catalysed reaction is a hydroperoxide + [thioredoxin]-dithiol = an alcohol + [thioredoxin]-disulfide + H2O. In terms of biological role, thiol-specific peroxidase that catalyzes the reduction of hydrogen peroxide and organic hydroperoxides to water and alcohols, respectively. Plays a role in cell protection against oxidative stress by detoxifying peroxides. The chain is Peroxiredoxin from Thermotoga petrophila (strain ATCC BAA-488 / DSM 13995 / JCM 10881 / RKU-1).